The following is a 494-amino-acid chain: MLASGLLLAALLACLTVMILLSVWRQRKLWGKLPPGPTPLPFIGNYLQLNTEQMYDSLMKISERYGPVFTIHLGPRRIVVLCGQEAVKEALVDQAEDFSGRGELATFDWLFKGYGVVFSSWERARPLRRFAISTLRDFGVGKRGIEERIQEEAGFLIEAFRDTRGAFIDPTFFLSRTVSNVISSIVFGDRFDYEDKEFLSLLRMMLGSFQFTATPTGQLYEMFYSVMKHLPGPQQQAFKELEGLRDFIAKKVERNQRTLDPNSPRDFIDSFLIRMQEEKKDPKSEFHMKNLVMTTLNLFFAGTETVSTTMRYGFLLLMKHPDVEAKVHEEIDRVIGRNRQPKFEDRAKMPYTEAVIHEIQRFTDMIPMGLAHRVTRDTKFRDFLLPKGAEVFPMLGSVLKDPKFFSKPREFYPQHFLDEKGQFKKSDAFMPFSVGKRYCLGEGLARMELFLFFTTIMQNFRFRSQQAPQDIDVSPKHVGFATIPRTYTMSFVPR.

Lys379 is modified (N6-acetyllysine). Cys439 is a heme binding site.

Belongs to the cytochrome P450 family. The cofactor is heme. Expressed in liver and lung as well as in nasal tissues.

It localises to the endoplasmic reticulum membrane. It is found in the microsome membrane. It carries out the reaction an organic molecule + reduced [NADPH--hemoprotein reductase] + O2 = an alcohol + oxidized [NADPH--hemoprotein reductase] + H2O + H(+). Functionally, catalyzes the oxygenation of a variety of substrates, including ethanol and procarcinogens such as N-nitrosodiethylamine and phenacetin. Exhibits a high coumarin 7-hydroxylase activity. Converts also testosterone to androstenedione. This is Cytochrome P450 2A10 (CYP2A10) from Oryctolagus cuniculus (Rabbit).